The chain runs to 389 residues: Alpha carbonic anhydrase 8 (389 aa).

The signal sequence occupies residues 1-22 (MKISSLGWVLVLIFISITIVSS). The tract at residues 21-153 (SSAPAPKPPK…TKGNKGPAKW (133 aa)) is disordered. The segment covering 25–129 (APKPPKPKPA…PKPKPAPKPA (105 aa)) has biased composition (pro residues). Residues 138 to 374 (TEFSYETKGN…VNKRKVYLYK (237 aa)) enclose the Alpha-carbonic anhydrase domain. A disulfide bond links C163 and C324. A glycan (N-linked (GlcNAc...) asparagine) is linked at N196. H204 serves as the catalytic Proton acceptor. H232, H234, and H251 together coordinate Zn(2+). 320 to 321 (TA) serves as a coordination point for substrate. N385 is a glycosylation site (N-linked (GlcNAc...) asparagine).

Belongs to the alpha-class carbonic anhydrase family. Zn(2+) serves as cofactor. N-glycosylated.

The protein resides in the plastid. It is found in the chloroplast stroma. It catalyses the reaction hydrogencarbonate + H(+) = CO2 + H2O. Functionally, reversible hydration of carbon dioxide. The sequence is that of Alpha carbonic anhydrase 8 (ACA8) from Arabidopsis thaliana (Mouse-ear cress).